The following is a 101-amino-acid chain: uncharacterized protein (101 aa).

The segment at 39–74 is disordered; it reads CDERHGRPLPHSQESQHGSATSKKAVRGTADTAPLE. The span at 50-60 shows a compositional bias: polar residues; it reads SQESQHGSATS.

This is an uncharacterized protein from Homo sapiens (Human).